The primary structure comprises 232 residues: Phosphoribosylformylglycinamidine synthase subunit PurQ (232 aa).

The Glutamine amidotransferase type-1 domain maps to K2–F232. The active-site Nucleophile is the C86. Residues H203 and E205 contribute to the active site.

In terms of assembly, part of the FGAM synthase complex composed of 1 PurL, 1 PurQ and 2 PurS subunits.

The protein localises to the cytoplasm. It catalyses the reaction N(2)-formyl-N(1)-(5-phospho-beta-D-ribosyl)glycinamide + L-glutamine + ATP + H2O = 2-formamido-N(1)-(5-O-phospho-beta-D-ribosyl)acetamidine + L-glutamate + ADP + phosphate + H(+). It carries out the reaction L-glutamine + H2O = L-glutamate + NH4(+). Its pathway is purine metabolism; IMP biosynthesis via de novo pathway; 5-amino-1-(5-phospho-D-ribosyl)imidazole from N(2)-formyl-N(1)-(5-phospho-D-ribosyl)glycinamide: step 1/2. In terms of biological role, part of the phosphoribosylformylglycinamidine synthase complex involved in the purines biosynthetic pathway. Catalyzes the ATP-dependent conversion of formylglycinamide ribonucleotide (FGAR) and glutamine to yield formylglycinamidine ribonucleotide (FGAM) and glutamate. The FGAM synthase complex is composed of three subunits. PurQ produces an ammonia molecule by converting glutamine to glutamate. PurL transfers the ammonia molecule to FGAR to form FGAM in an ATP-dependent manner. PurS interacts with PurQ and PurL and is thought to assist in the transfer of the ammonia molecule from PurQ to PurL. The chain is Phosphoribosylformylglycinamidine synthase subunit PurQ from Methanosarcina mazei (strain ATCC BAA-159 / DSM 3647 / Goe1 / Go1 / JCM 11833 / OCM 88) (Methanosarcina frisia).